Here is a 585-residue protein sequence, read N- to C-terminus: Glutamate decarboxylase 2 (585 aa).

The segment at 1–25 (MASPGSGFWSFGSEDGSGDPENPGT) is disordered. Phosphoserine occurs at positions 3, 6, 10, 13, and 17. Residues Cys30 and Cys45 are each lipidated (S-palmitoyl cysteine). Position 181–183 (181–183 (QLS)) interacts with substrate. Residue Lys396 is modified to N6-(pyridoxal phosphate)lysine. Arg558 serves as a coordination point for substrate.

It belongs to the group II decarboxylase family. In terms of assembly, homodimer. Pyridoxal 5'-phosphate is required as a cofactor. The N-terminus is blocked. In terms of processing, phosphorylated; which does not affect kinetic parameters or subcellular location. Post-translationally, palmitoylated; which is required for presynaptic clustering.

It localises to the cytoplasm. It is found in the cytosol. The protein resides in the cytoplasmic vesicle. The protein localises to the presynaptic cell membrane. Its subcellular location is the golgi apparatus membrane. It carries out the reaction L-glutamate + H(+) = 4-aminobutanoate + CO2. Its function is as follows. Catalyzes the production of GABA. This is Glutamate decarboxylase 2 (Gad2) from Rattus norvegicus (Rat).